Consider the following 302-residue polypeptide: Cardiolipin synthase (CMP-forming) (302 aa).

The tract at residues 65-84 (PRTHCSGAGKAAPEPAAGGD) is disordered. Low complexity predominate over residues 71-84 (GAGKAAPEPAAGGD). 5 consecutive transmembrane segments (helical) span residues 109–129 (IPNL…YLIL), 133–153 (FNVA…DGFI), 190–212 (IPVP…VFYV), 250–270 (LILV…SIYL), and 271–289 (QILW…YSYY).

The protein belongs to the CDP-alcohol phosphatidyltransferase class-I family. It depends on a divalent metal cation as a cofactor.

It is found in the mitochondrion inner membrane. It catalyses the reaction a CDP-1,2-diacyl-sn-glycerol + a 1,2-diacyl-sn-glycero-3-phospho-(1'-sn-glycerol) = a cardiolipin + CMP + H(+). Catalyzes the synthesis of cardiolipin (CL) (diphosphatidylglycerol) by specifically transferring a phosphatidyl group from CDP-diacylglycerol to phosphatidylglycerol (PG). CL is a key phospholipid in mitochondrial membranes and plays important roles in maintaining the functional integrity and dynamics of mitochondria under both optimal and stress conditions. This is Cardiolipin synthase (CMP-forming) (Crls1) from Rattus norvegicus (Rat).